Reading from the N-terminus, the 758-residue chain is Catalase-peroxidase (758 aa).

Over residues Met1–Val10 the composition is skewed to polar residues. Positions Met1–Arg57 are disordered. Positions Trp128–Tyr250 form a cross-link, tryptophyl-tyrosyl-methioninium (Trp-Tyr) (with M-276). His129 acts as the Proton acceptor in catalysis. The tryptophyl-tyrosyl-methioninium (Tyr-Met) (with W-128) cross-link spans Tyr250–Met276. Residue His291 coordinates heme b.

Belongs to the peroxidase family. Peroxidase/catalase subfamily. In terms of assembly, homodimer or homotetramer. Heme b is required as a cofactor. Post-translationally, formation of the three residue Trp-Tyr-Met cross-link is important for the catalase, but not the peroxidase activity of the enzyme.

The enzyme catalyses H2O2 + AH2 = A + 2 H2O. The catalysed reaction is 2 H2O2 = O2 + 2 H2O. Bifunctional enzyme with both catalase and broad-spectrum peroxidase activity. This chain is Catalase-peroxidase, found in Salinispora tropica (strain ATCC BAA-916 / DSM 44818 / JCM 13857 / NBRC 105044 / CNB-440).